The sequence spans 377 residues: Testis-expressed protein 13A (377 aa).

Residues 92–377 (WLQDLSSLHK…CGKGIWLQNP (286 aa)) form a required for repression of transcription region. Residues 122-156 (QKEVALQLQMAQAKLEEVQRERDLLRLKILQAELR) adopt a coiled-coil conformation. Residues 142 to 165 (ERDLLRLKILQAELRALPNAVRPA) form an LRR repeat. A RanBP2-type zinc finger spans residues 345–369 (RPGDWDCPWCKAVNFSRRENCFHCG). Zn(2+)-binding residues include Cys-351, Cys-354, Cys-365, and Cys-368.

This sequence belongs to the TEX13 family. As to quaternary structure, interacts with CNOT1; the interaction may inhibit CNOT1 binding to mRNA and subsequently CNOT1-mediated mRNA degradation.

Its function is as follows. Binds to ssRNA containing the consensus sequence 5'-AGGUAA-3'. Plays a role in transcriptional repression. Required for rapid sperm motility and timely degradation of mRNA via its interaction with CNOT1. The chain is Testis-expressed protein 13A from Mus musculus (Mouse).